A 161-amino-acid chain; its full sequence is Small ribosomal subunit protein uS9 (161 aa).

Belongs to the universal ribosomal protein uS9 family.

This Rickettsia canadensis (strain McKiel) protein is Small ribosomal subunit protein uS9.